The primary structure comprises 424 residues: Elongation factor 1-alpha (424 aa).

In terms of domain architecture, tr-type G spans 5 to 223 (KPHLNLAFIG…NALKEPQKPV (219 aa)). The tract at residues 14–21 (GHVDHGKS) is G1. 14–21 (GHVDHGKS) is a binding site for GTP. A Mg(2+)-binding site is contributed by Ser21. A G2 region spans residues 70–74 (GVTID). The G3 stretch occupies residues 91-94 (DCPG). GTP contacts are provided by residues 91–95 (DCPGH) and 146–149 (NKMD). A G4 region spans residues 146-149 (NKMD). A G5 region spans residues 187-189 (SAY).

It belongs to the TRAFAC class translation factor GTPase superfamily. Classic translation factor GTPase family. EF-Tu/EF-1A subfamily.

Its subcellular location is the cytoplasm. The catalysed reaction is GTP + H2O = GDP + phosphate + H(+). Functionally, GTP hydrolase that promotes the GTP-dependent binding of aminoacyl-tRNA to the A-site of ribosomes during protein biosynthesis. This is Elongation factor 1-alpha from Methanothrix thermoacetophila (strain DSM 6194 / JCM 14653 / NBRC 101360 / PT) (Methanosaeta thermophila).